The following is a 135-amino-acid chain: Ribosome-binding factor A (135 aa).

This sequence belongs to the RbfA family. As to quaternary structure, monomer. Binds 30S ribosomal subunits, but not 50S ribosomal subunits or 70S ribosomes.

The protein resides in the cytoplasm. In terms of biological role, one of several proteins that assist in the late maturation steps of the functional core of the 30S ribosomal subunit. Associates with free 30S ribosomal subunits (but not with 30S subunits that are part of 70S ribosomes or polysomes). Required for efficient processing of 16S rRNA. May interact with the 5'-terminal helix region of 16S rRNA. This is Ribosome-binding factor A from Aliivibrio salmonicida (strain LFI1238) (Vibrio salmonicida (strain LFI1238)).